Here is a 420-residue protein sequence, read N- to C-terminus: Calreticulin (420 aa).

The N-terminal stretch at 1-25 is a signal peptide; it reads MAIRKGSSYAVAALLALASVAAVAG. Residue Asn57 is glycosylated (N-linked (GlcNAc...) asparagine). The an alpha-D-glucoside site is built by Tyr115, Lys117, Tyr134, and Asp141. Tandem repeats lie at residues 197 to 208, 216 to 227, 233 to 244, 251 to 262, 266 to 276, 280 to 290, and 294 to 304. The interval 197–262 is 4 X approximate repeats; that stretch reads KHTGSIYEHW…DAKKPEDWDD (66 aa). The span at 213–258 shows a compositional bias: basic and acidic residues; sequence KIKDPEAKKPEDWDDKEYIPDPEDKKPEGYDDIPKEIPDPDAKKPE. The tract at residues 213–285 is disordered; sequence KIKDPEAKKP…PEYKGPWKQK (73 aa). Residues 266 to 304 are 3 X approximate repeats; that stretch reads GEWTAPTIPNPEYKGPWKQKKIKNPNYQGKWKAPMIDNP. Glu324 is a binding site for an alpha-D-glucoside. Basic and acidic residues predominate over residues 355 to 381; that stretch reads GKHKEAEKAAFDEAEKKKEEEDAAKGG. The disordered stretch occupies residues 355 to 420; the sequence is GKHKEAEKAA…DSDDEKHDEL (66 aa). Residues 382–402 are compositionally biased toward acidic residues; it reads DDEDDDLEDEEDDEKADEDKA. The segment covering 403–420 has biased composition (basic and acidic residues); it reads DSDAEDGKDSDDEKHDEL. Positions 417–420 match the Prevents secretion from ER motif; it reads HDEL.

Belongs to the calreticulin family.

The protein localises to the endoplasmic reticulum lumen. Its function is as follows. Molecular calcium-binding chaperone promoting folding, oligomeric assembly and quality control in the ER via the calreticulin/calnexin cycle. This lectin may interact transiently with almost all of the monoglucosylated glycoproteins that are synthesized in the ER. In Zea mays (Maize), this protein is Calreticulin (CRT).